The following is a 348-amino-acid chain: Protein RecA (348 aa).

Gly-66–Thr-73 provides a ligand contact to ATP.

Belongs to the RecA family.

The protein localises to the cytoplasm. Can catalyze the hydrolysis of ATP in the presence of single-stranded DNA, the ATP-dependent uptake of single-stranded DNA by duplex DNA, and the ATP-dependent hybridization of homologous single-stranded DNAs. It interacts with LexA causing its activation and leading to its autocatalytic cleavage. The chain is Protein RecA from Neisseria gonorrhoeae (strain NCCP11945).